The chain runs to 284 residues: RNase adapter protein RapZ (284 aa).

ATP is bound at residue Gly8 to Ser15. Residue Asp56 to Asn59 coordinates GTP. The segment at Arg266 to Ser284 is RNA-binding.

It belongs to the RapZ-like family. RapZ subfamily. Homotrimer.

Modulates the synthesis of GlmS, by affecting the processing and stability of the regulatory small RNA GlmZ. When glucosamine-6-phosphate (GlcN6P) concentrations are high in the cell, RapZ binds GlmZ and targets it to cleavage by RNase E. Consequently, GlmZ is inactivated and unable to activate GlmS synthesis. Under low GlcN6P concentrations, RapZ is sequestered and inactivated by an other regulatory small RNA, GlmY, preventing GlmZ degradation and leading to synthesis of GlmS. In Sodalis glossinidius (strain morsitans), this protein is RNase adapter protein RapZ.